A 423-amino-acid chain; its full sequence is D-tagatose-1,6-bisphosphate aldolase subunit GatZ (423 aa).

It belongs to the GatZ/KbaZ family. GatZ subfamily. Forms a complex with GatY.

It functions in the pathway carbohydrate metabolism; D-tagatose 6-phosphate degradation; D-glyceraldehyde 3-phosphate and glycerone phosphate from D-tagatose 6-phosphate: step 2/2. Functionally, component of the tagatose-1,6-bisphosphate aldolase GatYZ that is required for full activity and stability of the Y subunit. Could have a chaperone-like function for the proper and stable folding of GatY. When expressed alone, GatZ does not show any aldolase activity. Is involved in the catabolism of galactitol. This Salmonella paratyphi B (strain ATCC BAA-1250 / SPB7) protein is D-tagatose-1,6-bisphosphate aldolase subunit GatZ.